The following is a 355-amino-acid chain: Peptide chain release factor 1 (355 aa).

An N5-methylglutamine modification is found at Gln233.

Belongs to the prokaryotic/mitochondrial release factor family. Post-translationally, methylated by PrmC. Methylation increases the termination efficiency of RF1.

Its subcellular location is the cytoplasm. Its function is as follows. Peptide chain release factor 1 directs the termination of translation in response to the peptide chain termination codons UAG and UAA. The sequence is that of Peptide chain release factor 1 from Clostridium tetani (strain Massachusetts / E88).